Reading from the N-terminus, the 283-residue chain is 1D-myo-inositol 2-acetamido-2-deoxy-alpha-D-glucopyranoside deacetylase (283 aa).

Zn(2+)-binding residues include H7, D10, and H148.

This sequence belongs to the MshB deacetylase family. Requires Zn(2+) as cofactor.

It catalyses the reaction 1D-myo-inositol 2-acetamido-2-deoxy-alpha-D-glucopyranoside + H2O = 1D-myo-inositol 2-amino-2-deoxy-alpha-D-glucopyranoside + acetate. Catalyzes the deacetylation of 1D-myo-inositol 2-acetamido-2-deoxy-alpha-D-glucopyranoside (GlcNAc-Ins) in the mycothiol biosynthesis pathway. In Gordonia bronchialis (strain ATCC 25592 / DSM 43247 / BCRC 13721 / JCM 3198 / KCTC 3076 / NBRC 16047 / NCTC 10667) (Rhodococcus bronchialis), this protein is 1D-myo-inositol 2-acetamido-2-deoxy-alpha-D-glucopyranoside deacetylase.